An 846-amino-acid polypeptide reads, in one-letter code: Iron-sulfur cluster assembly SufBD family protein Mb1496 (846 aa).

Positions 1 to 20 are disordered; the sequence is MTLTPEASKSVAQPPTQAPL. Residues 388 to 528 form the DOD-type homing endonuclease domain; sequence LAGYYLAEGH…LQSILARLGH (141 aa).

It belongs to the iron-sulfur cluster assembly SufBD family. In terms of processing, this protein undergoes a protein self splicing that involves a post-translational excision of the intervening region (intein) followed by peptide ligation.

This Mycobacterium bovis (strain ATCC BAA-935 / AF2122/97) protein is Iron-sulfur cluster assembly SufBD family protein Mb1496.